The following is a 452-amino-acid chain: Neuromedin-K receptor (452 aa).

The Extracellular segment spans residues 1 to 71; the sequence is MASVPTGENW…TNQFVQPSWR (71 aa). Residues Asn-9, Asn-23, Asn-40, and Asn-60 are each glycosylated (N-linked (GlcNAc...) asparagine). Residues 72-94 form a helical membrane-spanning segment; it reads IALWSLAYGLVVAVAVFGNLIVI. The Cytoplasmic segment spans residues 95-104; that stretch reads WIILAHKRMR. A helical membrane pass occupies residues 105–126; the sequence is TVTNYFLVNLAFSDASVAAFNT. The Extracellular segment spans residues 127–146; that stretch reads LVNFIYGVHSEWYFGANYCR. Residues Cys-145 and Cys-220 are joined by a disulfide bond. Residues 147 to 168 traverse the membrane as a helical segment; the sequence is FQNFFPITAVFASIYSMTAIAV. Topologically, residues 169–188 are cytoplasmic; sequence DRYMAIIDPLKPRLSATATK. Residues 189-209 form a helical membrane-spanning segment; the sequence is IVIGSIWILAFLLAFPQCLYS. The Extracellular segment spans residues 210–232; the sequence is KIKVMPGRTLCYVQWPEGPKQHF. Residues 233-257 traverse the membrane as a helical segment; the sequence is TYHIIVIILVYCFPLLIMGVTYTIV. Residues 258–286 lie on the Cytoplasmic side of the membrane; it reads GITLWGGEIPGDTCDKYHEQLKAKRKVVK. The helical transmembrane segment at 287–308 threads the bilayer; the sequence is MMIIVVVTFAICWLPYHVYFIL. The Extracellular segment spans residues 309 to 321; that stretch reads TAIYQQLNRWKYI. A helical membrane pass occupies residues 322 to 346; the sequence is QQVYLASFWLAMSSTMYNPIIYCCL. The Cytoplasmic segment spans residues 347–452; that stretch reads NKRFRAGFKR…SPYTSVDEYS (106 aa). The S-palmitoyl cysteine moiety is linked to residue Cys-361. The segment at 401–452 is disordered; the sequence is DPSEGDPAKSSRKKRAVPRDPSANGCSHREFKSASTTSSFISSPYTSVDEYS. Residues 433-452 are compositionally biased toward low complexity; the sequence is SASTTSSFISSPYTSVDEYS.

This sequence belongs to the G-protein coupled receptor 1 family. The anchoring of this receptor to the plasma membrane is probably mediated by the palmitoylation of a cysteine residue.

Its subcellular location is the cell membrane. Its function is as follows. This is a receptor for the tachykinin neuropeptide neuromedin-K (neurokinin B). It is associated with G proteins that activate a phosphatidylinositol-calcium second messenger system. The chain is Neuromedin-K receptor (Tacr3) from Mus musculus (Mouse).